We begin with the raw amino-acid sequence, 294 residues long: Agamous-like MADS-box protein AGL82 (294 aa).

In terms of domain architecture, MADS-box spans 1–51 (MVPKVVDLQRIANDKTRITTYKKRKASLYKKAQEFSTLCGVETCLIVYGPT).

Interacts with MEE14/CBP1.

It is found in the nucleus. Functionally, probable transcription factor that may function in the maintenance of the proper function of the central cell in pollen tube attraction. This Arabidopsis thaliana (Mouse-ear cress) protein is Agamous-like MADS-box protein AGL82.